The chain runs to 92 residues: Small ribosomal subunit protein uS19 (92 aa).

Belongs to the universal ribosomal protein uS19 family.

In terms of biological role, protein S19 forms a complex with S13 that binds strongly to the 16S ribosomal RNA. The sequence is that of Small ribosomal subunit protein uS19 from Buchnera aphidicola subsp. Schizaphis graminum (strain Sg).